The primary structure comprises 665 residues: MRHFKVKAMVQSLDISAITGQQTDAEPSKRSKPSALRRTLQALRQRLTKRNRPKPPDWFLEKFSNTTNTDKIGKGCPAMEDAALSSEIRGSSVLCNRLSVDPTLQSHYRWLAIVSLAVLYNIIFVVGRAVFWEINKSAPAFWYTLDYLCDFIYLLDTLVHMHEGFLDQGLLVRDAFRLRRHYFHTKGWYLDVLSMLPTDLAYIWWPPETCSSLYLPCPVIVRLNRLLRINRLWEWFDRTETATGYPNAFRICKVVLAILVLIHWNACMYFAISYEIGFSSDSWVYNLNGTRNNTLQRQYIYSFYWSTLTLTTIGETPTPENDVEYLFVVADFLAGVLIFATIVGNIGSMISNMNVARVEFQNRMDGVKQYMAFRRVGHELEARVIRWFAYTWSQSGALDEERVLAALPDKLKAEIAIQVHMDTLKQVRIFHDTEPGLLEALVLKLKLQVFSPGDYICRKGDVGKEMYIVKRGKLSVVGDDGITVLATLGAGSVFGEVSVLEIAGNRTGNRRTANVRSLGYSDLFCLAKRDLWETLSDYPEARSTLTQRGCQLLRKDGLLDEQIFADSQRVHDSIEGGIEKLELSVENLNMRLARLLAEYTASQAKIKQRLAKLEMNGGPGTWRLECEPQSRARSGRLYSLQPKRRPRSRPDATAKSSDAAKQNTL.

Topologically, residues 1–110 (MRHFKVKAMV…DPTLQSHYRW (110 aa)) are cytoplasmic. A helical transmembrane segment spans residues 111–131 (LAIVSLAVLYNIIFVVGRAVF). The Extracellular portion of the chain corresponds to 132-138 (WEINKSA). Asn135 carries an N-linked (GlcNAc...) asparagine glycan. Residues 139 to 159 (PAFWYTLDYLCDFIYLLDTLV) form a helical membrane-spanning segment. At 160–186 (HMHEGFLDQGLLVRDAFRLRRHYFHTK) the chain is on the cytoplasmic side. A helical membrane pass occupies residues 187–207 (GWYLDVLSMLPTDLAYIWWPP). Over 208-253 (ETCSSLYLPCPVIVRLNRLLRINRLWEWFDRTETATGYPNAFRICK) the chain is Extracellular. A helical transmembrane segment spans residues 254–274 (VVLAILVLIHWNACMYFAISY). Residues 275 to 325 (EIGFSSDSWVYNLNGTRNNTLQRQYIYSFYWSTLTLTTIGETPTPENDVEY) are Cytoplasmic-facing. The helical transmembrane segment at 326–346 (LFVVADFLAGVLIFATIVGNI) threads the bilayer. Over 347 to 481 (GSMISNMNVA…GKLSVVGDDG (135 aa)) the chain is Extracellular. Residues 437–559 (LLEA…DGLL), Glu496, and Arg511 each bind 3',5'-cyclic GMP. A helical transmembrane segment spans residues 482-502 (ITVLATLGAGSVFGEVSVLEI). The Cytoplasmic portion of the chain corresponds to 503–665 (AGNRTGNRRT…SSDAAKQNTL (163 aa)). The interval 633–665 (RSGRLYSLQPKRRPRSRPDATAKSSDAAKQNTL) is disordered. Positions 654 to 665 (AKSSDAAKQNTL) are enriched in polar residues.

This sequence belongs to the cyclic nucleotide-gated cation channel (TC 1.A.1.5) family. In terms of tissue distribution, expressed in antennae and the visual system.

The protein resides in the membrane. Its function is as follows. Approximately 50-fold more sensitive to cGMP than to cAMP. May be involved in transduction cascades of both invertebrate photoreceptors and olfactory sensillae. The chain is Cyclic nucleotide-gated cation channel subunit A (CngA) from Drosophila melanogaster (Fruit fly).